The chain runs to 205 residues: Holliday junction branch migration complex subunit RuvA (205 aa).

The interval 1 to 64 (MIGKLKGVVD…EDMIRLYGFR (64 aa)) is domain I. The interval 65 to 143 (SDAEREWFRL…AFAPVDPALV (79 aa)) is domain II. The interval 144-152 (RLAGAVEAR) is flexible linker. The interval 153 to 205 (TAPQPVADAISALVNLGYPQAQASAAVAAALQSAGAEAEAKTLIRLGLRELAR) is domain III.

It belongs to the RuvA family. As to quaternary structure, homotetramer. Forms an RuvA(8)-RuvB(12)-Holliday junction (HJ) complex. HJ DNA is sandwiched between 2 RuvA tetramers; dsDNA enters through RuvA and exits via RuvB. An RuvB hexamer assembles on each DNA strand where it exits the tetramer. Each RuvB hexamer is contacted by two RuvA subunits (via domain III) on 2 adjacent RuvB subunits; this complex drives branch migration. In the full resolvosome a probable DNA-RuvA(4)-RuvB(12)-RuvC(2) complex forms which resolves the HJ.

The protein localises to the cytoplasm. In terms of biological role, the RuvA-RuvB-RuvC complex processes Holliday junction (HJ) DNA during genetic recombination and DNA repair, while the RuvA-RuvB complex plays an important role in the rescue of blocked DNA replication forks via replication fork reversal (RFR). RuvA specifically binds to HJ cruciform DNA, conferring on it an open structure. The RuvB hexamer acts as an ATP-dependent pump, pulling dsDNA into and through the RuvAB complex. HJ branch migration allows RuvC to scan DNA until it finds its consensus sequence, where it cleaves and resolves the cruciform DNA. This chain is Holliday junction branch migration complex subunit RuvA, found in Methylobacterium sp. (strain 4-46).